Here is a 405-residue protein sequence, read N- to C-terminus: CMP-sialic acid transporter 3 (405 aa).

At 1-39 (MKNGIAECPACHSKLVSPGSKTISRAYDDHKIRVSSKQR) the chain is on the cytoplasmic side. A helical membrane pass occupies residues 40 to 60 (VLNVLLVVGDCMLVGLQPVLV). Over 61–73 (YMSKVDGKFNFSP) the chain is Lumenal. The helical transmembrane segment at 74–94 (ISVNFLTEIAKVIFAIVMLLI) threads the bilayer. Residues 95 to 142 (QARHQKVGEKPLLSVSTFVQAARNNVLLAVPALLYAINNYLKFTMQLY) are Cytoplasmic-facing. Residues 143–163 (FNPATVKMLSNLKVLVIAVLL) form a helical membrane-spanning segment. Residues 164–170 (KMVMKRR) lie on the Lumenal side of the membrane. The chain crosses the membrane as a helical span at residues 171-191 (FSIIQWEALALLLIGISVNQL). The Cytoplasmic portion of the chain corresponds to 192–199 (RSLPEGAT). The chain crosses the membrane as a helical span at residues 200–220 (AIGIPLATGAYVCTVIFVTVP). At 221 to 243 (SMASVFNEYALKSQYDTSIYLQN) the chain is on the lumenal side. A helical membrane pass occupies residues 244–264 (LFLYGYGAIFNFLGILGTVIY). Topologically, residues 265–280 (KGPGSFDILQGHSRAT) are cytoplasmic. The chain crosses the membrane as a helical span at residues 281 to 301 (MFLILNNAAQGILSSFFFKYA). Over 302 to 321 (DTILKKYSSTVATIFTGIAS) the chain is Lumenal. Residues 322–342 (AALFGHVITMNFLLGISIVFI) traverse the membrane as a helical segment. The Cytoplasmic portion of the chain corresponds to 343-405 (SMHQFFSPLA…SDDRTPLLPR (63 aa)). Residues 385 to 405 (GANEEASHRGESDDRTPLLPR) are disordered. Positions 389-405 (EASHRGESDDRTPLLPR) are enriched in basic and acidic residues.

It belongs to the nucleotide-sugar transporter family. CMP-Sialate:CMP antiporter (TC 2.A.7.12) subfamily.

It is found in the golgi apparatus membrane. Sugar transporter involved in the transport of CMP-sialic acid from the cytoplasm into the Golgi. The polypeptide is CMP-sialic acid transporter 3 (UTR6) (Arabidopsis thaliana (Mouse-ear cress)).